A 237-amino-acid polypeptide reads, in one-letter code: Phosphoribosylaminoimidazole-succinocarboxamide synthase (237 aa).

Belongs to the SAICAR synthetase family.

It carries out the reaction 5-amino-1-(5-phospho-D-ribosyl)imidazole-4-carboxylate + L-aspartate + ATP = (2S)-2-[5-amino-1-(5-phospho-beta-D-ribosyl)imidazole-4-carboxamido]succinate + ADP + phosphate + 2 H(+). It functions in the pathway purine metabolism; IMP biosynthesis via de novo pathway; 5-amino-1-(5-phospho-D-ribosyl)imidazole-4-carboxamide from 5-amino-1-(5-phospho-D-ribosyl)imidazole-4-carboxylate: step 1/2. The chain is Phosphoribosylaminoimidazole-succinocarboxamide synthase from Campylobacter fetus subsp. fetus (strain 82-40).